The sequence spans 122 residues: Large ribosomal subunit protein uL14 (122 aa).

It belongs to the universal ribosomal protein uL14 family. In terms of assembly, part of the 50S ribosomal subunit. Forms a cluster with proteins L3 and L19. In the 70S ribosome, L14 and L19 interact and together make contacts with the 16S rRNA in bridges B5 and B8.

Functionally, binds to 23S rRNA. Forms part of two intersubunit bridges in the 70S ribosome. The polypeptide is Large ribosomal subunit protein uL14 (Stenotrophomonas maltophilia (strain R551-3)).